The following is a 918-amino-acid chain: NEDD4-like E3 ubiquitin-protein ligase WWP1 (918 aa).

The region spanning 1–116 (MATASPRSDT…THNRKLEKVK (116 aa)) is the C2 domain. Polar residues-rich tracts occupy residues 150 to 164 (TNRS…QQNG), 209 to 219 (NGENTPSSPSQ), and 235 to 258 (SAPT…STMG). 2 disordered regions span residues 150 to 182 (TNRS…PRLP) and 209 to 360 (NGEN…PHGR). The span at 266 to 281 (TTSTSNCTSTTTQEPP) shows a compositional bias: low complexity. WW domains are found at residues 345 to 378 (EALP…RPQP), 377 to 410 (QPLP…RPTM), 452 to 485 (GPLP…DPRT), and 492 to 525 (EPLP…DPRN). The interval 345–525 (EALPSGWEQR…RTTTFKDPRN (181 aa)) is interaction with ERBB4. A required for interaction with and ubiquitination of AMOTL2. Required for interaction with YAP1 region spans residues 345 to 527 (EALPSGWEQR…TTFKDPRNGK (183 aa)). An HECT domain is found at 584–918 (KPYDLRRRLY…IEETEGFGQE (335 aa)). The active-site Glycyl thioester intermediate is C886.

Interacts with the Crumbs complex components PALS1 and PATJ; interaction with the Crumbs complex is enhanced by WWP1's interaction with AMOTL2 and facilitates WWP1 localization to the plasma membrane. Interaction with the Crumbs complex promotes WWP1 monoubiquitination of AMOTL2, which activates the Hippo signaling pathway. Binds SCNN1A, SCNN1B, SCNN1G, WBP1, WBP2, DRPLA and adenovirus type 2 PIII. Interacts with TGIF. Binds KLF2 AND HIVEP3. Interacts with RNF11. Interacts with SPART. Interacts with NDFIP1 and NDFIP2; this interaction activates the E3 ubiquitin-protein ligase. Interacts with ERBB4 isoforms JM-B CYT-1 and JM-A CYT-1. Does not interact with ERB4 isoform JMA-A CYT-2. Interacts with SMAD1, SMAD2, SMAD3, SMAD5, SMAD6, SMAD7, TGFBR1 and TGFBR2. Associates with the TGFBR1:TGFBR2 receptor complex in presence of SMAD7. Interacts with SKIL isoform 1. Interacts with TP63 isoform 1 and isoform 2. Interacts (via WW domains) with ARRDC1, ARRDC2 and ARRDC3. Post-translationally, auto-ubiquitinated and ubiquitinated by RNF11.

It is found in the cytoplasm. The protein localises to the cell membrane. It localises to the nucleus. Its subcellular location is the cell junction. The catalysed reaction is S-ubiquitinyl-[E2 ubiquitin-conjugating enzyme]-L-cysteine + [acceptor protein]-L-lysine = [E2 ubiquitin-conjugating enzyme]-L-cysteine + N(6)-ubiquitinyl-[acceptor protein]-L-lysine.. It functions in the pathway protein modification; protein ubiquitination. Activated by NDFIP1- and NDFIP2-binding. E3 ubiquitin-protein ligase which accepts ubiquitin from an E2 ubiquitin-conjugating enzyme in the form of a thioester and then directly transfers the ubiquitin to targeted substrates. Ubiquitinates and promotes degradation of SMAD2 in response to TGF-beta signaling, which requires interaction with TGIF. Ubiquitinates ERBB4 isoforms JM-A CYT-1 and JM-B CYT-1, KLF2, KLF5 and TP63 and promotes their proteasomal degradation. Ubiquitinates RNF11 without targeting it for degradation. Ubiquitinates and promotes degradation of TGFBR1; the ubiquitination is enhanced by SMAD7. Ubiquitinates SMAD6 and SMAD7. Activates the Hippo signaling pathway in response to cell contact inhibition and recruitment to the Crumbs complex at the cell membrane. Monoubiquitinates AMOTL2 which facilitates its interaction with and activation of LATS2. LATS2 then phosphorylates YAP1, excluding it from the nucleus and therefore ultimately represses YAP1-driven transcription of target genes. This chain is NEDD4-like E3 ubiquitin-protein ligase WWP1 (Wwp1), found in Mus musculus (Mouse).